A 359-amino-acid chain; its full sequence is DNA replication and repair protein RecF (359 aa).

Position 30 to 37 (30 to 37 (GQNAQGKT)) interacts with ATP.

The protein belongs to the RecF family.

It is found in the cytoplasm. The RecF protein is involved in DNA metabolism; it is required for DNA replication and normal SOS inducibility. RecF binds preferentially to single-stranded, linear DNA. It also seems to bind ATP. This Lactococcus lactis subsp. cremoris (strain SK11) protein is DNA replication and repair protein RecF.